The sequence spans 885 residues: Leucine--tRNA ligase (885 aa).

Residues 46 to 56 (PYPSGALHMGH) carry the 'HIGH' region motif. The short motif at 638-642 (KMSKS) is the 'KMSKS' region element. Lysine 641 contacts ATP.

The protein belongs to the class-I aminoacyl-tRNA synthetase family.

Its subcellular location is the cytoplasm. The catalysed reaction is tRNA(Leu) + L-leucine + ATP = L-leucyl-tRNA(Leu) + AMP + diphosphate. The chain is Leucine--tRNA ligase from Xanthomonas campestris pv. campestris (strain B100).